A 406-amino-acid chain; its full sequence is Sensor histidine kinase YxjM (406 aa).

Topologically, residues 1-13 are cytoplasmic; it reads MNGQTPARHYYKK. Residues 14-34 form a helical membrane-spanning segment; the sequence is LVPSLILILNCIQFLSHPTKA. At 35–36 the chain is on the extracellular side; sequence DP. The helical transmembrane segment at 37–57 threads the bilayer; that stretch reads ILLAFVFAVYLAFIWIIPYVA. Position 58 (S58) is a topological domain, cytoplasmic. The next 2 helical transmembrane spans lie at 59-79 and 80-100; these read TAVS…FWAV and SGQE…YAAF. Residue R101 is a topological domain, cytoplasmic. Residues 102–122 form a helical membrane-spanning segment; that stretch reads LPSRLSLIFTACLIGGNILLL. The Extracellular portion of the chain corresponds to 123–125; sequence SSQ. A helical membrane pass occupies residues 126 to 146; that stretch reads GGSLNTIISNISIMLGLYVLF. Topologically, residues 147–406 are cytoplasmic; it reads SSMRFRREAR…TNKEQKDEQR (260 aa). One can recognise a Histidine kinase domain in the interval 209 to 396; sequence DIHDSIGHEL…KIELSLPLMT (188 aa). Residue H211 is modified to Phosphohistidine; by autocatalysis.

The protein resides in the cell membrane. It carries out the reaction ATP + protein L-histidine = ADP + protein N-phospho-L-histidine.. Its function is as follows. Probable member of the two-component regulatory system YxjM/YxjL. May activate YxjL by phosphorylation. This is Sensor histidine kinase YxjM (yxjM) from Bacillus subtilis (strain 168).